Here is a 1827-residue protein sequence, read N- to C-terminus: Phenolphthiocerol/phthiocerol polyketide synthase subunit C (1827 aa).

A Ketosynthase family 3 (KS3) domain is found at 35–461 (CEPVAVVGIG…GTNAHVVVEQ (427 aa)). Active-site for beta-ketoacyl synthase activity residues include cysteine 207, histidine 342, and histidine 383. The segment at 566 to 876 (VFVYSGQGSQ…LAAVGVAASE (311 aa)) is acyltransferase. Serine 654 acts as the For malonyltransferase activity in catalysis. Positions 910 to 1037 (HPLLGAHIEM…AKVEQSPREC (128 aa)) are N-terminal hotdog fold. A dehydratase region spans residues 910 to 1076 (HPLLGAHIEM…QHHGPAFAAL (167 aa)). Positions 910–1198 (HPLLGAHIEM…LRRVERRAVP (289 aa)) constitute a PKS/mFAS DH domain. Histidine 942 acts as the Proton acceptor; for dehydratase activity in catalysis. The C-terminal hotdog fold stretch occupies residues 1050-1198 (GTTVSPADFY…LRRVERRAVP (149 aa)). The active-site Proton donor; for dehydratase activity is aspartate 1111. Residues 1439-1617 (ASYVVTGGLG…VINWGPWSEV (179 aa)) form a beta-ketoacyl reductase region. An NADP(+)-binding site is contributed by 1440–1485 (SYVVTGGLGGLGLVVARWLVDRGAGRVVLGGRSDPTDEQCNVLAEL). The region spanning 1706–1785 (RAVTERMCAR…DLTADLMRQL (80 aa)) is the Carrier domain. Serine 1745 is modified (O-(pantetheine 4'-phosphoryl)serine). Positions 1807–1820 (RAAARHGAAMRRRP) are enriched in basic residues. The interval 1807 to 1827 (RAAARHGAAMRRRPKPEVQGG) is disordered.

NADP(+) serves as cofactor. It depends on pantetheine 4'-phosphate as a cofactor.

It catalyses the reaction icosanoyl-[(phenol)carboxyphthiodiolenone synthase] + 2 (S)-methylmalonyl-CoA + 3 malonyl-CoA + 5 NADPH + 10 H(+) = C32-carboxyphthiodiolenone-[(phenol)carboxyphthiodiolenone synthase] + 5 CO2 + 5 NADP(+) + 5 CoA + 2 H2O. It carries out the reaction docosanoyl-[(phenol)carboxyphthiodiolenone synthase] + 2 (S)-methylmalonyl-CoA + 3 malonyl-CoA + 5 NADPH + 10 H(+) = C34-carboxyphthiodiolenone-[(phenol)carboxyphthiodiolenone synthase] + 5 CO2 + 5 NADP(+) + 5 CoA + 2 H2O. The enzyme catalyses 17-(4-hydroxyphenyl)heptadecanoyl-[(phenol)carboxyphthiodiolenone synthase] + 2 (S)-methylmalonyl-CoA + 3 malonyl-CoA + 5 NADPH + 10 H(+) = C35-(phenol)carboxyphthiodiolenone-[(phenol)carboxyphthiodiolenone synthase] + 5 CO2 + 5 NADP(+) + 5 CoA + 2 H2O. The catalysed reaction is 19-(4-hydroxyphenyl)nonadecanoyl-[(phenol)carboxyphthiodiolenone synthase] + 2 (S)-methylmalonyl-CoA + 3 malonyl-CoA + 5 NADPH + 10 H(+) = C37-(phenol)carboxyphthiodiolenone-[(phenol)carboxyphthiodiolenone synthase] + 5 CO2 + 5 NADP(+) + 5 CoA + 2 H2O. The protein operates within lipid metabolism; fatty acid biosynthesis. In terms of biological role, part of the PpsABCDE complex involved in the biosynthesis of the lipid core common to phthiocerols and phenolphthiocerols by successive additions of malonyl-CoA or methylmalonyl-CoA extender units. PpsA can accept as substrate the activated forms of either icosanoyl (C20), docosanoyl (C22) or lignoceroyl (C24) groups from FadD26, or a (4-hydroxyphenyl)-C17 or (4-hydroxyphenyl)-C19 fatty acyl from FadD29. PpsA initiates the biosynthesis and extends its substrate using a malonyl-CoA extender unit. The PpsB and PpsC proteins add the second and third malonyl-CoA extender units. PpsD adds an (R)-methylmalonyl unit and PpsE adds a second (R)-methylmalonyl unit. The incorporation of the methylmalonyl units results in formation of two branched methyl groups in the elongated product. In Mycobacterium tuberculosis (strain CDC 1551 / Oshkosh), this protein is Phenolphthiocerol/phthiocerol polyketide synthase subunit C (ppsD).